Reading from the N-terminus, the 228-residue chain is 5'-methylthioadenosine/S-adenosylhomocysteine nucleosidase (228 aa).

Glu-11 acts as the Proton acceptor in catalysis. Substrate-binding positions include Gly-77, Ile-151, and 172 to 173 (ME). The active-site Proton donor is the Asp-196.

This sequence belongs to the PNP/UDP phosphorylase family. MtnN subfamily.

The catalysed reaction is S-adenosyl-L-homocysteine + H2O = S-(5-deoxy-D-ribos-5-yl)-L-homocysteine + adenine. The enzyme catalyses S-methyl-5'-thioadenosine + H2O = 5-(methylsulfanyl)-D-ribose + adenine. It carries out the reaction 5'-deoxyadenosine + H2O = 5-deoxy-D-ribose + adenine. It participates in amino-acid biosynthesis; L-methionine biosynthesis via salvage pathway; S-methyl-5-thio-alpha-D-ribose 1-phosphate from S-methyl-5'-thioadenosine (hydrolase route): step 1/2. In terms of biological role, catalyzes the irreversible cleavage of the glycosidic bond in both 5'-methylthioadenosine (MTA) and S-adenosylhomocysteine (SAH/AdoHcy) to adenine and the corresponding thioribose, 5'-methylthioribose and S-ribosylhomocysteine, respectively. Also cleaves 5'-deoxyadenosine, a toxic by-product of radical S-adenosylmethionine (SAM) enzymes, into 5-deoxyribose and adenine. The chain is 5'-methylthioadenosine/S-adenosylhomocysteine nucleosidase from Staphylococcus carnosus (strain TM300).